Consider the following 290-residue polypeptide: Non-homologous end joining protein Ku (290 aa).

Positions 11–183 (TFGLISMPVR…EAPKITSEVK (173 aa)) constitute a Ku domain. The disordered stretch occupies residues 253-290 (MKDQKKGSRLAEVDKESTVQMTPKKPAVKERRGRKRVA). The span at 254–269 (KDQKKGSRLAEVDKES) shows a compositional bias: basic and acidic residues.

This sequence belongs to the prokaryotic Ku family. Homodimer. Interacts with LigD.

With LigD forms a non-homologous end joining (NHEJ) DNA repair enzyme, which repairs dsDNA breaks with reduced fidelity. Binds linear dsDNA with 5'- and 3'- overhangs but not closed circular dsDNA nor ssDNA. Recruits and stimulates the ligase activity of LigD. In Koribacter versatilis (strain Ellin345), this protein is Non-homologous end joining protein Ku.